A 463-amino-acid chain; its full sequence is Hydroxyacid-oxoacid transhydrogenase, mitochondrial (463 aa).

This sequence belongs to the iron-containing alcohol dehydrogenase family. Hydroxyacid-oxoacid transhydrogenase subfamily.

It is found in the mitochondrion. The enzyme catalyses (S)-3-hydroxybutanoate + 2-oxoglutarate = (R)-2-hydroxyglutarate + acetoacetate. It carries out the reaction 4-hydroxybutanoate + 2-oxoglutarate = (R)-2-hydroxyglutarate + succinate semialdehyde. In terms of biological role, catalyzes the cofactor-independent reversible oxidation of gamma-hydroxybutyrate (GHB) to succinic semialdehyde (SSA) coupled to reduction of 2-ketoglutarate (2-KG) to D-2-hydroxyglutarate (D-2-HG). L-3-hydroxybutyrate (L-3-OHB) is also a substrate for HOT when using 2-KG as hydrogen acceptor, resulting in the formation of D-2-HG. The protein is Hydroxyacid-oxoacid transhydrogenase, mitochondrial (adhfe1) of Xenopus laevis (African clawed frog).